The chain runs to 660 residues: Bifunctional polymyxin resistance protein ArnA (660 aa).

A formyltransferase ArnAFT region spans residues 1–304 (MKAVVFAYHD…TLGLVAGAII (304 aa)). The active-site Proton donor; for formyltransferase activity is the H104. (6R)-10-formyltetrahydrofolate contacts are provided by residues R114 and 136–140 (VSRAD). The interval 314–660 (RRTRVLILGV…KTVELTEPQA (347 aa)) is dehydrogenase ArnADH. NAD(+) contacts are provided by residues D347 and 368–369 (DI). UDP-alpha-D-glucuronate-binding positions include A393, Y398, and 432–433 (TS). Catalysis depends on E434, which acts as the Proton acceptor; for decarboxylase activity. Residues R460, N492, 526–535 (KLIDGGRQKR), and Y613 contribute to the UDP-alpha-D-glucuronate site. R619 functions as the Proton donor; for decarboxylase activity in the catalytic mechanism.

This sequence in the N-terminal section; belongs to the Fmt family. UDP-L-Ara4N formyltransferase subfamily. In the C-terminal section; belongs to the NAD(P)-dependent epimerase/dehydratase family. UDP-glucuronic acid decarboxylase subfamily. In terms of assembly, homohexamer, formed by a dimer of trimers.

It catalyses the reaction UDP-alpha-D-glucuronate + NAD(+) = UDP-beta-L-threo-pentopyranos-4-ulose + CO2 + NADH. The enzyme catalyses UDP-4-amino-4-deoxy-beta-L-arabinose + (6R)-10-formyltetrahydrofolate = UDP-4-deoxy-4-formamido-beta-L-arabinose + (6S)-5,6,7,8-tetrahydrofolate + H(+). Its pathway is nucleotide-sugar biosynthesis; UDP-4-deoxy-4-formamido-beta-L-arabinose biosynthesis; UDP-4-deoxy-4-formamido-beta-L-arabinose from UDP-alpha-D-glucuronate: step 1/3. It participates in nucleotide-sugar biosynthesis; UDP-4-deoxy-4-formamido-beta-L-arabinose biosynthesis; UDP-4-deoxy-4-formamido-beta-L-arabinose from UDP-alpha-D-glucuronate: step 3/3. It functions in the pathway bacterial outer membrane biogenesis; lipopolysaccharide biosynthesis. Its function is as follows. Bifunctional enzyme that catalyzes the oxidative decarboxylation of UDP-glucuronic acid (UDP-GlcUA) to UDP-4-keto-arabinose (UDP-Ara4O) and the addition of a formyl group to UDP-4-amino-4-deoxy-L-arabinose (UDP-L-Ara4N) to form UDP-L-4-formamido-arabinose (UDP-L-Ara4FN). The modified arabinose is attached to lipid A and is required for resistance to polymyxin and cationic antimicrobial peptides. The protein is Bifunctional polymyxin resistance protein ArnA of Enterobacter sp. (strain 638).